Consider the following 104-residue polypeptide: Large ribosomal subunit protein bL28 (104 aa).

This sequence belongs to the bacterial ribosomal protein bL28 family.

This is Large ribosomal subunit protein bL28 from Wolbachia pipientis wMel.